We begin with the raw amino-acid sequence, 143 residues long: Transcriptional regulator MraZ (143 aa).

SpoVT-AbrB domains lie at S5–E47 and A76–R119.

This sequence belongs to the MraZ family. Forms oligomers.

It localises to the cytoplasm. Its subcellular location is the nucleoid. The protein is Transcriptional regulator MraZ of Parafrankia sp. (strain EAN1pec).